The following is a 327-amino-acid chain: Zinc transport protein ZntB (327 aa).

Topologically, residues 1 to 271 (MDVVEGKALQ…AMNRRTYTMS (271 aa)) are cytoplasmic. The chain crosses the membrane as a helical span at residues 272-292 (LLAMVFLPTTFLTGLFGVNLG). At 293–300 (GIPGNTDA) the chain is on the periplasmic side. Residues 301 to 321 (FGFTIFCMMLVVLVLSVAWWL) form a helical membrane-spanning segment. Over 322 to 327 (KRSKWL) the chain is Cytoplasmic.

The protein belongs to the CorA metal ion transporter (MIT) (TC 1.A.35) family.

The protein resides in the cell inner membrane. It catalyses the reaction Zn(2+)(out) + H(+)(out) = Zn(2+)(in) + H(+)(in). Zinc transporter. Acts as a Zn(2+):proton symporter, which likely mediates zinc ion uptake. The sequence is that of Zinc transport protein ZntB from Yersinia pseudotuberculosis serotype O:1b (strain IP 31758).